The chain runs to 396 residues: MTTLVLDNGAYNAKIGYSHENVSVIPNCQFRSKTARLKTFTANQIDEIKDPSGLFYILPFQKGYLVNWDVQRQVWDYLFGKEMYQVDFLDTNIIITEPYFNFTSIQESMNEILFEEYQFQAVLRVNAGALSAHRYFRDNPSELCCIIVDSGYSFTHIVPYCRSKKKKEAIIRINVGGKLLTNHLKEIISYRQLHVMDETHVINQVKEDVCYVSQDFYRDMDIAKLKGEENTVMIDYVLPDFSTIKKGFCKPREEMVLSGKYKSGEQILRLANERFAVPEILFNPSDIGIQEMGIPEAIVYSIQNLPEEMQPHFFKNIVLTGGNSLFPGFRDRVYSEVRCLTPTDYDVSVVLPENPITYAWEGGKLISENDDFEDMVVTREDYEENGHSVCEEKFDI.

N-acetylthreonine is present on T2. K260 bears the N6-acetyllysine mark.

Belongs to the actin family. ARP6 subfamily. As to quaternary structure, component of the chromatin-remodeling SRCAP complex composed of at least SRCAP, DMAP1, RUVBL1, RUVBL2, ACTL6A, YEATS4, ACTR6 and ZNHIT1. Interacts with CBX1, CBX3 and CBX5.

The protein localises to the cytoplasm. Its subcellular location is the cytoskeleton. It localises to the nucleus. It is found in the nucleolus. Its function is as follows. Required for formation and/or maintenance of proper nucleolar structure and function. Plays a dual role in the regulation of ribosomal DNA (rDNA) transcription. In the presence of high glucose, maintains active rDNA transcription through H2A.Z deposition and under glucose starvation, is required for the repression of rDNA transcription, and this function may be independent of H2A.Z. The polypeptide is Actin-related protein 6 (ACTR6) (Homo sapiens (Human)).